The primary structure comprises 481 residues: Argininosuccinate lyase (481 aa).

The protein belongs to the lyase 1 family. Argininosuccinate lyase subfamily.

The protein localises to the cytoplasm. The catalysed reaction is 2-(N(omega)-L-arginino)succinate = fumarate + L-arginine. It functions in the pathway amino-acid biosynthesis; L-arginine biosynthesis; L-arginine from L-ornithine and carbamoyl phosphate: step 3/3. The polypeptide is Argininosuccinate lyase (Methanococcus vannielii (strain ATCC 35089 / DSM 1224 / JCM 13029 / OCM 148 / SB)).